A 325-amino-acid polypeptide reads, in one-letter code: Dimethylsulfide dehydrogenase subunit beta (325 aa).

4Fe-4S ferredoxin-type domains are found at residues 6 to 35, 123 to 154, and 156 to 185; these read ISMV…RNGR, SYYF…KRQE, and GIVL…FNEQ. 7 residues coordinate [4Fe-4S] cluster: C15, C18, C21, C25, C132, C135, and C140. [3Fe-4S] cluster contacts are provided by C144, C165, and C171. Residues C175, C192, C195, C207, and C211 each contribute to the [4Fe-4S] cluster site.

Heterotrimer of alpha, beta and gamma subunits. Requires [3Fe-4S] cluster as cofactor. It depends on [4Fe-4S] cluster as a cofactor.

The protein localises to the periplasm. In terms of biological role, electron transfer subunit of the dehydrogenase during anaerobic growth on dimethyl sulfide. In Rhodovulum sulfidophilum (Rhodobacter sulfidophilus), this protein is Dimethylsulfide dehydrogenase subunit beta (ddhB).